A 104-amino-acid chain; its full sequence is Urease subunit beta (104 aa).

It belongs to the urease beta subunit family. As to quaternary structure, heterotrimer of UreA (gamma), UreB (beta) and UreC (alpha) subunits. Three heterotrimers associate to form the active enzyme.

Its subcellular location is the cytoplasm. It carries out the reaction urea + 2 H2O + H(+) = hydrogencarbonate + 2 NH4(+). The protein operates within nitrogen metabolism; urea degradation; CO(2) and NH(3) from urea (urease route): step 1/1. The protein is Urease subunit beta of Mycobacterium bovis (strain BCG / Pasteur 1173P2).